A 232-amino-acid chain; its full sequence is T-cell surface glycoprotein CD1b-3 (232 aa).

Topologically, residues 1–201 (GLQEFQFEYP…LYWGHPMYIG (201 aa)) are extracellular. 3 cysteine pairs are disulfide-bonded: Cys-19–Cys-83, Cys-48–Cys-62, and Cys-123–Cys-178. N-linked (GlcNAc...) asparagine glycosylation is present at Asn-45. An Ig-like domain is found at 84-194 (PRYLLGVLDA…LGDQDIILYW (111 aa)). Residues 202–222 (LIFVAIIVPSLILLICLALWF) form a helical membrane-spanning segment. Residues 223–232 (WRRWSYQTVL) lie on the Cytoplasmic side of the membrane.

As to quaternary structure, heterodimer with B2M (beta-2-microglobulin). Interacts with saposin C.

The protein localises to the cell membrane. It localises to the endosome membrane. It is found in the lysosome membrane. Its function is as follows. Antigen-presenting protein that binds self and non-self lipid and glycolipid antigens and presents them to T-cell receptors on natural killer T-cells. The chain is T-cell surface glycoprotein CD1b-3 from Ovis aries (Sheep).